The primary structure comprises 773 residues: MDTISDVMKHCVPINYDDYDPLPADHFSTYPVFCSKATAEAIEASAEFTRKWKRACEVDGLHQDKLNFQACTTHLGHYNQWAYPDCLPERVSLNAVLSDCAFFWDGMSPVTGRSTNVMITSPVDVSDSISAEKMNELTQDFGIAMLSELQSGRRIEPRFEINKMAVQVIRDFIAVDPFTGIGHLKEWKGHLDAQEKSTHNNMSWEKYVEHRVNESGGNWGISVGCWTNDIRISDEEKESVKYLTQLACAGGILGNDYYSFPKEFDEHHRSGTLDRLQNGVALLMREYGYTEEEAKEIIKKEVIIREKKWMDGFDAWSRQAGPETGEIRRYLVMTMALMSGSMFWMSHAGRYHRTDLATTAEDRATLIGKSRGALRVLAGYPPPKNLEGIVREPLASAVQDDNGHVQHKDAVADSSVRNGVHHAFKKRNSRNGKQNGTEGSKSTFTNGNYVQPAKLQQHGTSINSMAIYTAPFQEAAGDICDAPYSYIDSLPSKKNRNKLLDLLNDWLQVPPSSLKRIKNIVHMLHNSSLMLDDIEDASALRRGQPATHTFYGISQTINSANYVYVHAVHEVTRLYNPDADELRNLHRGQSLDLYWRHHARCPSMEEYIVMVDNKTGGLFRLMLRLMTAESSISRPLDTALCRLLTLTGRYYQIRDDYLNLASADYESKKGFCEDFDEGKFSLPLIHLLSHTRYPDRITSALFNRKPGTNLPYEMKRYILAEMEEVQTLAYSQDVLKYLHEELMHALDETENRLGANDGIRMMLLGMGPKLLLC.

The interval 4-359 (ISDVMKHCVP…RYHRTDLATT (356 aa)) is sesterterpenoid synthase. Mg(2+) is bound at residue Asp105. Asp105 is a binding site for substrate. The segment at 211 to 214 (RVNE) is substrate. Position 255 (Asn255) interacts with substrate. 2 substrate regions span residues 259–263 (SFPKE) and 350–351 (RY). Residues 360–769 (AEDRATLIGK…RMMLLGMGPK (410 aa)) form a geranylfarnesyl diphosphate synthase region. The interval 423 to 447 (AFKKRNSRNGKQNGTEGSKSTFTNG) is disordered. Polar residues predominate over residues 431–447 (NGKQNGTEGSKSTFTNG). Lys493, Arg496, and His525 together coordinate isopentenyl diphosphate. Residues Asp532 and Asp536 each coordinate Mg(2+). Arg541 contacts dimethylallyl diphosphate. Isopentenyl diphosphate is bound at residue Arg542. Positions 614, 615, 652, 659, and 669 each coordinate dimethylallyl diphosphate.

The protein in the N-terminal section; belongs to the terpene synthase family. This sequence in the C-terminal section; belongs to the FPP/GGPP synthase family.

It carries out the reaction 4 isopentenyl diphosphate + dimethylallyl diphosphate = (2E,6E,10E,14E)-geranylfarnesyl diphosphate + 4 diphosphate. It catalyses the reaction (2E,6E,10E,14E)-geranylfarnesyl diphosphate + H2O = preaspterpenacid acid I + diphosphate. The protein operates within secondary metabolite biosynthesis; terpenoid biosynthesis. In terms of biological role, sesterterpenoid synthase; part of the gene cluster that mediates the biosynthesis of aspterpenacids. Performs both prenyl transferase and terpene cyclase activity, converting isopentenyl diphosphate and dimethylallyl diphosphate into geranylfarnesyl diphosphate (GFPP) and then converting GFPP into preaspterpenacid I. C22-oxidative modification of preaspterpenacid I by the cytochrome P450 monooxygenase sttB then leads to preaspterpenacid II. It has still to be determined how preaspterpenacid II is further modified to produce aspterpenacids. This is Preaspterpenacid I synthase sttA from Aspergillus terreus (strain NIH 2624 / FGSC A1156).